Consider the following 537-residue polypeptide: Immunoglobulin-like domain-containing receptor 1 (537 aa).

Positions Met1–Ser22 are cleaved as a signal peptide. In terms of domain architecture, Ig-like V-type spans Leu23 to Lys161. Over Leu23 to His166 the chain is Extracellular. A disulfide bridge links Cys44 with Cys144. The chain crosses the membrane as a helical span at residues Trp167–Cys187. Over Trp188–Ile537 the chain is Cytoplasmic. The interval Pro333–Ile537 is disordered. The span at Ser341 to Ser357 shows a compositional bias: polar residues. Composition is skewed to basic and acidic residues over residues Arg359–Gln380 and Arg434–Arg444. The span at Gln480 to Ser490 shows a compositional bias: basic residues. Phosphoserine is present on residues Ser490 and Ser492. The segment covering Gly518–His530 has biased composition (basic and acidic residues).

This sequence belongs to the immunoglobulin superfamily. LISCH7 family. As to quaternary structure, homooligomer. Interacts with MARVELD2 and OCLN; the interaction is required to recruit MARVELD2 to tricellular contacts. Interacts (via C-terminus) with TRA2A, TRA2B and SRSF1. Interacts with PLSCR1. As to expression, expressed in the vestibule and in hair cells and supporting cells of the cochlea. Expressed in epithelial tissues. Highly expressed in colon but also detected in small intestine, bladder and lung. In colon, expressed in the upper portion of the crypts (at protein level). Expressed in CCK secretory cells of the proximal small intestine (at protein level). Expressed in the organ of Corti, stria vascularis, utricle and saccule of the inner ear.

Its subcellular location is the cell membrane. The protein resides in the cell junction. It is found in the tight junction. It localises to the nucleus. The protein localises to the cytoplasm. Maintains epithelial barrier function by recruiting MARVELD2/tricellulin to tricellular tight junctions (tTJs). Crucial for normal hearing by maintaining the structural and functional integrity of tTJs, which are critical for the survival of auditory neurosensory HCs. Mediates fatty acids and lipoproteins-stimulated CCK/cholecystokinin secretion in the small intestine. In the inner ear, may regulate alternative pre-mRNA splicing via binding to TRA2A, TRA2B and SRSF1. This chain is Immunoglobulin-like domain-containing receptor 1, found in Mus musculus (Mouse).